The sequence spans 355 residues: 3,4-dihydroxy-2-butanone 4-phosphate synthase (355 aa).

The interval 1-202 (MYHKRIKEAI…VSDIIQYRLN (202 aa)) is DHBP synthase. D-ribulose 5-phosphate contacts are provided by residues 27–28 (RE), Asp-32, 139–143 (RTGHT), and Glu-163. Mg(2+) is bound at residue Glu-28. His-142 provides a ligand contact to Mg(2+). The segment at 203–355 (FENLLREITR…NLHLVEKIEV (153 aa)) is GTP cyclohydrolase II-like.

It in the N-terminal section; belongs to the DHBP synthase family. The protein in the C-terminal section; belongs to the GTP cyclohydrolase II family. Requires Mg(2+) as cofactor. It depends on Mn(2+) as a cofactor.

The catalysed reaction is D-ribulose 5-phosphate = (2S)-2-hydroxy-3-oxobutyl phosphate + formate + H(+). It participates in cofactor biosynthesis; riboflavin biosynthesis; 2-hydroxy-3-oxobutyl phosphate from D-ribulose 5-phosphate: step 1/1. In terms of biological role, catalyzes the conversion of D-ribulose 5-phosphate to formate and 3,4-dihydroxy-2-butanone 4-phosphate. The sequence is that of 3,4-dihydroxy-2-butanone 4-phosphate synthase (ribB) from Helicobacter hepaticus (strain ATCC 51449 / 3B1).